We begin with the raw amino-acid sequence, 106 residues long: MGNNSTWSQSENLTADKQKEKLQPPSMYNVVLNNDDYTPMEFVIDVLQKFFSYDIERATQLMLTVHYQGKAICGVFSAEVAETKVVQVNRYARENEHPLLCTLEKA.

Over residues 1–13 the composition is skewed to polar residues; the sequence is MGNNSTWSQSENL. Positions 1 to 21 are disordered; that stretch reads MGNNSTWSQSENLTADKQKEK.

This sequence belongs to the ClpS family. Binds to the N-terminal domain of the chaperone ClpA.

Functionally, involved in the modulation of the specificity of the ClpAP-mediated ATP-dependent protein degradation. This Pectobacterium carotovorum subsp. carotovorum (strain PC1) protein is ATP-dependent Clp protease adapter protein ClpS.